Here is a 430-residue protein sequence, read N- to C-terminus: Histidinol dehydrogenase (430 aa).

Substrate-binding residues include Ser-237, Gln-259, and His-262. Zn(2+) is bound by residues Gln-259 and His-262. Residues Glu-327 and His-328 each act as proton acceptor in the active site. Substrate is bound by residues His-328, Asp-361, Glu-415, and His-420. Asp-361 provides a ligand contact to Zn(2+). His-420 provides a ligand contact to Zn(2+).

It belongs to the histidinol dehydrogenase family. The cofactor is Zn(2+).

It catalyses the reaction L-histidinol + 2 NAD(+) + H2O = L-histidine + 2 NADH + 3 H(+). Its pathway is amino-acid biosynthesis; L-histidine biosynthesis; L-histidine from 5-phospho-alpha-D-ribose 1-diphosphate: step 9/9. Its function is as follows. Catalyzes the sequential NAD-dependent oxidations of L-histidinol to L-histidinaldehyde and then to L-histidine. The polypeptide is Histidinol dehydrogenase (Sulfurimonas denitrificans (strain ATCC 33889 / DSM 1251) (Thiomicrospira denitrificans (strain ATCC 33889 / DSM 1251))).